A 392-amino-acid polypeptide reads, in one-letter code: O-phospho-L-seryl-tRNA:Cys-tRNA synthase (392 aa).

Residues 84 to 85 (AR), asparagine 191, and 214 to 216 (SGH) contribute to the pyridoxal 5'-phosphate site. Position 217 is an N6-(pyridoxal phosphate)lysine (lysine 217).

Belongs to the SepCysS family. As to quaternary structure, homodimer. Interacts with SepRS. Pyridoxal 5'-phosphate is required as a cofactor.

The catalysed reaction is O-phospho-L-seryl-tRNA(Cys) + hydrogen sulfide + H(+) = L-cysteinyl-tRNA(Cys) + phosphate. In terms of biological role, converts O-phospho-L-seryl-tRNA(Cys) (Sep-tRNA(Cys)) to L-cysteinyl-tRNA(Cys) (Cys-tRNA(Cys)). The chain is O-phospho-L-seryl-tRNA:Cys-tRNA synthase from Methanopyrus kandleri (strain AV19 / DSM 6324 / JCM 9639 / NBRC 100938).